A 336-amino-acid chain; its full sequence is Holliday junction branch migration complex subunit RuvB (336 aa).

Residues 1 to 182 form a large ATPase domain (RuvB-L) region; the sequence is MAKRMITTEL…FGVVHRLEFY (182 aa). ATP is bound by residues L21, R22, G63, K66, T67, T68, 129 to 131, R172, Y182, and R219; that span reads EDY. Residue T67 coordinates Mg(2+). The small ATPAse domain (RuvB-S) stretch occupies residues 183-253; that stretch reads TTEELKEIIT…VARFALDILE (71 aa). A head domain (RuvB-H) region spans residues 256 to 336; that stretch reads KLGLDHIDRQ…GLPYENKELS (81 aa). DNA is bound by residues R311 and R316.

This sequence belongs to the RuvB family. Homohexamer. Forms an RuvA(8)-RuvB(12)-Holliday junction (HJ) complex. HJ DNA is sandwiched between 2 RuvA tetramers; dsDNA enters through RuvA and exits via RuvB. An RuvB hexamer assembles on each DNA strand where it exits the tetramer. Each RuvB hexamer is contacted by two RuvA subunits (via domain III) on 2 adjacent RuvB subunits; this complex drives branch migration. In the full resolvosome a probable DNA-RuvA(4)-RuvB(12)-RuvC(2) complex forms which resolves the HJ.

It is found in the cytoplasm. It catalyses the reaction ATP + H2O = ADP + phosphate + H(+). Functionally, the RuvA-RuvB-RuvC complex processes Holliday junction (HJ) DNA during genetic recombination and DNA repair, while the RuvA-RuvB complex plays an important role in the rescue of blocked DNA replication forks via replication fork reversal (RFR). RuvA specifically binds to HJ cruciform DNA, conferring on it an open structure. The RuvB hexamer acts as an ATP-dependent pump, pulling dsDNA into and through the RuvAB complex. RuvB forms 2 homohexamers on either side of HJ DNA bound by 1 or 2 RuvA tetramers; 4 subunits per hexamer contact DNA at a time. Coordinated motions by a converter formed by DNA-disengaged RuvB subunits stimulates ATP hydrolysis and nucleotide exchange. Immobilization of the converter enables RuvB to convert the ATP-contained energy into a lever motion, pulling 2 nucleotides of DNA out of the RuvA tetramer per ATP hydrolyzed, thus driving DNA branch migration. The RuvB motors rotate together with the DNA substrate, which together with the progressing nucleotide cycle form the mechanistic basis for DNA recombination by continuous HJ branch migration. Branch migration allows RuvC to scan DNA until it finds its consensus sequence, where it cleaves and resolves cruciform DNA. The chain is Holliday junction branch migration complex subunit RuvB from Lachnoclostridium phytofermentans (strain ATCC 700394 / DSM 18823 / ISDg) (Clostridium phytofermentans).